The sequence spans 357 residues: uncharacterized protein (357 aa).

Helical transmembrane passes span 13 to 33 (PVTG…TYLV), 44 to 64 (IACT…CAVY), 72 to 92 (VSTF…TCFL), 148 to 168 (VLTY…FCFV), 181 to 201 (LPIS…SGFF), 203 to 223 (YLFI…LGIW), 266 to 286 (IALT…SALF), 293 to 313 (SISG…PFLI), and 327 to 347 (YWVL…VVLL).

It is found in the mitochondrion membrane. This is an uncharacterized protein from Schizosaccharomyces pombe (strain 972 / ATCC 24843) (Fission yeast).